A 66-amino-acid polypeptide reads, in one-letter code: MKTSVLFVIFGLALLFCLSFAAELEDTGRQCGEFMWKCGAGKPTCCSGYDCSPTWKWCVLKSPGRR.

The N-terminal stretch at M1–A21 is a signal peptide. A propeptide spanning residues A22 to R29 is cleaved from the precursor. 3 cysteine pairs are disulfide-bonded: C31–C46, C38–C51, and C45–C58.

Belongs to the neurotoxin 10 (Hwtx-1) family. 29 (Jztx-13) subfamily. As to expression, expressed by the venom gland.

It localises to the secreted. Functionally, probable ion channel inhibitor. The protein is U10-theraphotoxin-Cg1a 1 of Chilobrachys guangxiensis (Chinese earth tiger tarantula).